A 179-amino-acid chain; its full sequence is Ubiquitin-conjugating enzyme E2 C (179 aa).

A disordered region spans residues 1-31 (MASQNVDPAAASSVASRKGQESGTSAARGSV). Residues 30–179 (SVGKRLQQEL…YQKQVREKEI (150 aa)) enclose the UBC core domain. Catalysis depends on C114, which acts as the Glycyl thioester intermediate.

It belongs to the ubiquitin-conjugating enzyme family. Component of the APC/C complex. Post-translationally, autoubiquitinated by the APC/C complex, leading to its degradation by the proteasome.

It catalyses the reaction S-ubiquitinyl-[E1 ubiquitin-activating enzyme]-L-cysteine + [E2 ubiquitin-conjugating enzyme]-L-cysteine = [E1 ubiquitin-activating enzyme]-L-cysteine + S-ubiquitinyl-[E2 ubiquitin-conjugating enzyme]-L-cysteine.. It carries out the reaction S-ubiquitinyl-[E1 ubiquitin-activating enzyme]-L-cysteine + [acceptor protein]-L-lysine = [E1 ubiquitin-activating enzyme]-L-cysteine + N(6)-monoubiquitinyl-[acceptor protein]-L-lysine.. It participates in protein modification; protein ubiquitination. Catalyzes the covalent attachment of ubiquitin to other proteins. Acts as an essential factor of the anaphase promoting complex/cyclosome (APC/C), a cell cycle-regulated ubiquitin ligase that controls progression through mitosis. Acts by initiating 'Lys-11'-linked polyubiquitin chains on APC/C substrates, leading to the degradation of APC/C substrates by the proteasome and promoting mitotic exit. The polypeptide is Ubiquitin-conjugating enzyme E2 C (ube2c) (Xenopus laevis (African clawed frog)).